A 366-amino-acid polypeptide reads, in one-letter code: Carbamoyl phosphate synthase small chain (366 aa).

A CPSase region spans residues 1-174 (MQEIPAILVL…GERYTVDNPD (174 aa)). Residues serine 48, glycine 226, and glycine 228 each coordinate L-glutamine. Positions 178 to 366 (HVVAFDYGIK…FTELMERLKN (189 aa)) constitute a Glutamine amidotransferase type-1 domain. Cysteine 256 (nucleophile) is an active-site residue. 5 residues coordinate L-glutamine: leucine 257, glutamine 260, asparagine 298, glycine 300, and phenylalanine 301. Residues histidine 340 and glutamate 342 contribute to the active site.

Belongs to the CarA family. As to quaternary structure, composed of two chains; the small (or glutamine) chain promotes the hydrolysis of glutamine to ammonia, which is used by the large (or ammonia) chain to synthesize carbamoyl phosphate. Tetramer of heterodimers (alpha,beta)4.

The enzyme catalyses hydrogencarbonate + L-glutamine + 2 ATP + H2O = carbamoyl phosphate + L-glutamate + 2 ADP + phosphate + 2 H(+). It carries out the reaction L-glutamine + H2O = L-glutamate + NH4(+). It participates in amino-acid biosynthesis; L-arginine biosynthesis; carbamoyl phosphate from bicarbonate: step 1/1. Its pathway is pyrimidine metabolism; UMP biosynthesis via de novo pathway; (S)-dihydroorotate from bicarbonate: step 1/3. Its function is as follows. Small subunit of the glutamine-dependent carbamoyl phosphate synthetase (CPSase). CPSase catalyzes the formation of carbamoyl phosphate from the ammonia moiety of glutamine, carbonate, and phosphate donated by ATP, constituting the first step of 2 biosynthetic pathways, one leading to arginine and/or urea and the other to pyrimidine nucleotides. The small subunit (glutamine amidotransferase) binds and cleaves glutamine to supply the large subunit with the substrate ammonia. The chain is Carbamoyl phosphate synthase small chain from Chlorobaculum tepidum (strain ATCC 49652 / DSM 12025 / NBRC 103806 / TLS) (Chlorobium tepidum).